A 368-amino-acid chain; its full sequence is Probable dual-specificity RNA methyltransferase RlmN (368 aa).

The active-site Proton acceptor is glutamate 109. Residues 115–355 form the Radical SAM core domain; it reads YPDRVTMCIS…VTIRDTRGQE (241 aa). An intrachain disulfide couples cysteine 122 to cysteine 360. Residues cysteine 129, cysteine 133, and cysteine 136 each contribute to the [4Fe-4S] cluster site. Residues 184–185, serine 218, 241–243, and asparagine 317 contribute to the S-adenosyl-L-methionine site; these read GE and SLH. The active-site S-methylcysteine intermediate is the cysteine 360.

Belongs to the radical SAM superfamily. RlmN family. [4Fe-4S] cluster is required as a cofactor.

It is found in the cytoplasm. The enzyme catalyses adenosine(2503) in 23S rRNA + 2 reduced [2Fe-2S]-[ferredoxin] + 2 S-adenosyl-L-methionine = 2-methyladenosine(2503) in 23S rRNA + 5'-deoxyadenosine + L-methionine + 2 oxidized [2Fe-2S]-[ferredoxin] + S-adenosyl-L-homocysteine. The catalysed reaction is adenosine(37) in tRNA + 2 reduced [2Fe-2S]-[ferredoxin] + 2 S-adenosyl-L-methionine = 2-methyladenosine(37) in tRNA + 5'-deoxyadenosine + L-methionine + 2 oxidized [2Fe-2S]-[ferredoxin] + S-adenosyl-L-homocysteine. Its function is as follows. Specifically methylates position 2 of adenine 2503 in 23S rRNA and position 2 of adenine 37 in tRNAs. The chain is Probable dual-specificity RNA methyltransferase RlmN from Streptomyces coelicolor (strain ATCC BAA-471 / A3(2) / M145).